The sequence spans 790 residues: Type VI secretion system spike protein VgrG5 (790 aa).

Composition is skewed to basic and acidic residues over residues 753-763 and 772-790; these read GFRDYRAEMPQ and AYRR…EPTP. The interval 753 to 790 is disordered; sequence GFRDYRAEMPQHKPRSAPDAYRRDASRPGAADKDEPTP.

The protein belongs to the VgrG protein family.

The protein resides in the secreted. In terms of biological role, part of the H2 type VI secretion system (H2-T6SS) specialized secretion system, which delivers several virulence factors in both prokaryotic and eukaryotic cells during infection. Allows the delivery of the phospholipase effector PldB to target cells where it exerts its toxicity. Also plays a role in VgrG4b and its effector PldA secretion. In Pseudomonas aeruginosa (strain ATCC 15692 / DSM 22644 / CIP 104116 / JCM 14847 / LMG 12228 / 1C / PRS 101 / PAO1), this protein is Type VI secretion system spike protein VgrG5.